The primary structure comprises 788 residues: Ribosome biogenesis protein ERB1 (788 aa).

The disordered stretch occupies residues 1–91; the sequence is MGDLKGSRKR…SKPIREKSKP (91 aa). A compositionally biased stretch (basic and acidic residues) spans 38–50; sequence LSDKSHDTEHSSD. A compositionally biased stretch (acidic residues) spans 51–78; that stretch reads SEIELVDDLSSDDGEEYEDEFDSDEIPS. Basic and acidic residues predominate over residues 80–91; it reads IESKPIREKSKP. WD repeat units lie at residues 433–472, 476–516, 613–651, 654–699, 703–742, and 758–788; these read GHSGRVRTLAIDPTGVWLASGGDDGTVRVWELLTGRQIWS, SDEE…PEME, KGGGPPQAAHFHPSKPILFVANQRTIRSYDLSRQSLVKI, PGAR…RPYK, YHQKAIRAVRYHSNYPLFADASDDGSLQIFHGSVTGDLLS, and TGELGVLDLDWHPREAWCVSAGADGTCRLWT.

Belongs to the WD repeat BOP1/ERB1 family. As to quaternary structure, component of the NOP7 complex, composed of ERB1, NOP7 and YTM1. The complex is held together by ERB1, which interacts with NOP7 via its N-terminal domain and with YTM1 via a high-affinity interaction between the seven-bladed beta-propeller domains of the 2 proteins. The NOP7 complex associates with the 66S pre-ribosome.

The protein resides in the nucleus. Its subcellular location is the nucleolus. It is found in the nucleoplasm. Functionally, component of the NOP7 complex, which is required for maturation of the 25S and 5.8S ribosomal RNAs and formation of the 60S ribosome. The polypeptide is Ribosome biogenesis protein ERB1 (Ajellomyces capsulatus (strain NAm1 / WU24) (Darling's disease fungus)).